The chain runs to 449 residues: Clusterin (449 aa).

Residues 1 to 21 (MKTLLLLVGLLLTLENGQVLG) form the signal peptide. The short motif at 77–80 (KKKK) is the Nuclear localization signal element. N-linked (GlcNAc...) asparagine glycosylation is found at Asn85 and Asn102. 5 cysteine pairs are disulfide-bonded: Cys101–Cys313, Cys112–Cys305, Cys115–Cys302, Cys120–Cys295, and Cys128–Cys285. Phosphoserine is present on Ser132. 5 N-linked (GlcNAc...) asparagine glycosylation sites follow: Asn144, Asn291, Asn328, Asn354, and Asn374. Ser396 is subject to Phosphoserine. The Nuclear localization signal signature appears at 443–447 (RQKNR).

The protein belongs to the clusterin family. Antiparallel disulfide-linked heterodimer of an alpha chain and a beta chain. Self-associates and forms higher oligomers. Interacts with a broad range of misfolded proteins, including APP, APOC2 and LYZ. Slightly acidic pH promotes interaction with misfolded proteins. Forms high-molecular weight oligomers upon interaction with misfolded proteins. Interacts with APOA1, LRP2, CLUAP1 and PON1. Interacts with the complement membrane attack complex. Interacts (via alpha chain) with XRCC6. Interacts with SYVN1, COMMD1, BTRC, CUL1 and with ubiquitin and SCF (SKP1-CUL1-F-box protein) E3 ubiquitin-protein ligase complexes. Interacts (via alpha chain) with BAX in stressed cells, where BAX undergoes a conformation change leading to association with the mitochondrial membrane. Does not interact with BAX in unstressed cells. Found in a complex with LTF, CLU, EPPIN and SEMG1. Interacts (immaturely glycosylated pre-secreted form) with HSPA5; this interaction promotes CLU stability and facilitates stress-induced CLU retrotranslocation from the secretory pathway to the mitochondria, thereby reducing stress-induced apoptosis by stabilizing mitochondrial membrane integrity. Interacts with BCL2L1; this interaction releases and activates BAX and promotes cell death. Interacts with TGFBR2 and ACVR1. Interacts (secreted form) with STMN3; this interaction may act as an important modulator during neuronal differentiation. Interacts with VLDLR and LRP8. In terms of processing, proteolytically cleaved on its way through the secretory system, probably within the Golgi lumen. Proteolytic cleavage is not necessary for its chaperone activity. All non-secreted forms are not proteolytically cleaved. Chaperone activity of uncleaved forms is dependent on a non-reducing environment. Post-translationally, polyubiquitinated, leading to proteasomal degradation. Under cellular stress, the intracellular level of cleaved form is reduced due to proteasomal degradation. Heavily N-glycosylated. About 30% of the protein mass is comprised of complex N-linked carbohydrate. Endoplasmic reticulum (ER) stress induces changes in glycosylation status and increases level of hypoglycosylated forms. Core carbohydrates are essential for chaperone activity. Non-secreted forms are hypoglycosylated or unglycosylated.

The protein resides in the secreted. Its subcellular location is the nucleus. It is found in the cytoplasm. It localises to the mitochondrion membrane. The protein localises to the cytosol. The protein resides in the microsome. Its subcellular location is the endoplasmic reticulum. It is found in the mitochondrion. It localises to the perinuclear region. The protein localises to the cytoplasmic vesicle. The protein resides in the secretory vesicle. Its subcellular location is the chromaffin granule. Its function is as follows. Functions as extracellular chaperone that prevents aggregation of non native proteins. Prevents stress-induced aggregation of blood plasma proteins. Inhibits formation of amyloid fibrils by APP, APOC2, B2M, CALCA, CSN3, SNCA and aggregation-prone LYZ variants (in vitro). Does not require ATP. Maintains partially unfolded proteins in a state appropriate for subsequent refolding by other chaperones, such as HSPA8/HSC70. Does not refold proteins by itself. Binding to cell surface receptors triggers internalization of the chaperone-client complex and subsequent lysosomal or proteasomal degradation. When secreted, protects cells against apoptosis and against cytolysis by complement: inhibits assembly of the complement membrane attack complex (MAC) by preventing polymerization of C9 pore component of the MAC complex. Intracellular forms interact with ubiquitin and SCF (SKP1-CUL1-F-box protein) E3 ubiquitin-protein ligase complexes and promote the ubiquitination and subsequent proteasomal degradation of target proteins. Promotes proteasomal degradation of COMMD1 and IKBKB. Modulates NF-kappa-B transcriptional activity. Following stress, promotes apoptosis. Inhibits apoptosis when associated with the mitochondrial membrane by interference with BAX-dependent release of cytochrome c into the cytoplasm. Plays a role in the regulation of cell proliferation. An intracellular form suppresses stress-induced apoptosis by stabilizing mitochondrial membrane integrity through interaction with HSPA5. Secreted form does not affect caspase or BAX-mediated intrinsic apoptosis and TNF-induced NF-kappa-B-activity. Secreted form act as an important modulator during neuronal differentiation through interaction with STMN3. Plays a role in the clearance of immune complexes that arise during cell injury. The protein is Clusterin (CLU) of Equus caballus (Horse).